The following is a 419-amino-acid chain: Divergent protein kinase domain 1C (419 aa).

Over 1-22 (MARAAGARGPAGWCRRRGRCGR) the chain is Cytoplasmic. The short motif at 16–17 (RR) is the May mediate ER retention element. A helical transmembrane segment spans residues 23–43 (GTLLAFAAWTAGWVLAAALLL). Residues 44 to 419 (RAHPGVLSER…TLRELQEAEK (376 aa)) lie on the Lumenal side of the membrane.

This sequence belongs to the DIPK family. In terms of processing, among the many cysteines in the lumenal domain, most are probably involved in disulfide bonds.

It localises to the endoplasmic reticulum membrane. The polypeptide is Divergent protein kinase domain 1C (Homo sapiens (Human)).